Here is a 410-residue protein sequence, read N- to C-terminus: Cysteine desulfurase (410 aa).

Lys-227 is modified (N6-(pyridoxal phosphate)lysine). The active-site Cysteine persulfide intermediate is the Cys-365.

It belongs to the class-V pyridoxal-phosphate-dependent aminotransferase family. Csd subfamily. In terms of assembly, homodimer. Interacts with SufE and the SufBCD complex composed of SufB, SufC and SufD. The interaction with SufE is required to mediate the direct transfer of the sulfur atom from the S-sulfanylcysteine. Pyridoxal 5'-phosphate serves as cofactor.

Its subcellular location is the cytoplasm. The catalysed reaction is (sulfur carrier)-H + L-cysteine = (sulfur carrier)-SH + L-alanine. It catalyses the reaction L-selenocysteine + AH2 = hydrogenselenide + L-alanine + A + H(+). It functions in the pathway cofactor biosynthesis; iron-sulfur cluster biosynthesis. Cysteine desulfurases mobilize the sulfur from L-cysteine to yield L-alanine, an essential step in sulfur metabolism for biosynthesis of a variety of sulfur-containing biomolecules. Component of the suf operon, which is activated and required under specific conditions such as oxidative stress and iron limitation. Acts as a potent selenocysteine lyase in vitro, that mobilizes selenium from L-selenocysteine. Selenocysteine lyase activity is however unsure in vivo. The sequence is that of Cysteine desulfurase from Wigglesworthia glossinidia brevipalpis.